A 318-amino-acid chain; its full sequence is Very-long-chain 3-oxoacyl-CoA reductase-A (318 aa).

The chain crosses the membrane as a helical span at residues Phe-15–Leu-35. Gly-54–Leu-83 is a binding site for NADP(+). A run of 2 helical transmembrane segments spans residues Gly-187–Tyr-207 and Ala-281–Met-301. Substrate is bound at residue Ser-194. The active-site Proton acceptor is the Tyr-207.

It belongs to the short-chain dehydrogenases/reductases (SDR) family. 17-beta-HSD 3 subfamily.

Its subcellular location is the endoplasmic reticulum membrane. The enzyme catalyses a very-long-chain (3R)-3-hydroxyacyl-CoA + NADP(+) = a very-long-chain 3-oxoacyl-CoA + NADPH + H(+). It catalyses the reaction 17beta-estradiol + NAD(+) = estrone + NADH + H(+). The catalysed reaction is 17beta-estradiol + NADP(+) = estrone + NADPH + H(+). It participates in lipid metabolism; fatty acid biosynthesis. The protein operates within steroid biosynthesis; estrogen biosynthesis. Catalyzes the second of the four reactions of the long-chain fatty acids elongation cycle. This endoplasmic reticulum-bound enzymatic process, allows the addition of two carbons to the chain of long- and very long-chain fatty acids/VLCFAs per cycle. This enzyme has a 3-ketoacyl-CoA reductase activity, reducing 3-ketoacyl-CoA to 3-hydroxyacyl-CoA, within each cycle of fatty acid elongation. Thereby, it may participate in the production of VLCFAs of different chain lengths that are involved in multiple biological processes as precursors of membrane lipids and lipid mediators. May also catalyze the transformation of estrone (E1) into estradiol (E2) and play a role in estrogen formation. This is Very-long-chain 3-oxoacyl-CoA reductase-A (hsd17b12-a) from Xenopus laevis (African clawed frog).